The following is a 226-amino-acid chain: Ras-related protein Rab11A (226 aa).

GTP-binding positions include 24-32, 43-49, 72-76, 130-133, and 160-162; these read GDSAVGKSQ, SLDSKST, DTAGQ, NKCD, and SAL. The Effector region motif lies at 46–54; the sequence is SKSTIGVEF. 2 S-geranylgeranyl cysteine lipidation sites follow: Cys-222 and Cys-223. Cysteine methyl ester is present on Cys-223. The propeptide at 224–226 is removed in mature form; that stretch reads QAS.

The protein belongs to the small GTPase superfamily. Rab family.

The protein localises to the cell membrane. The polypeptide is Ras-related protein Rab11A (RAB11A) (Lotus japonicus (Lotus corniculatus var. japonicus)).